The sequence spans 166 residues: UPF0336 protein ML2425 (166 aa).

Positions 10-131 (LIGKHYRQLD…VIAEVRSEVT (122 aa)) constitute a MaoC-like domain.

Belongs to the UPF0336 family.

The sequence is that of UPF0336 protein ML2425 from Mycobacterium leprae (strain TN).